Here is a 97-residue protein sequence, read N- to C-terminus: UPF0235 protein HAPS_1504 (97 aa).

The protein belongs to the UPF0235 family.

This Glaesserella parasuis serovar 5 (strain SH0165) (Haemophilus parasuis) protein is UPF0235 protein HAPS_1504.